Consider the following 837-residue polypeptide: Outer membrane usher protein HifC (837 aa).

An N-terminal signal peptide occupies residues 1–26; it reads MKTKNFPLNKIAFACTLLLANPVAWA. The cysteines at positions 813 and 833 are disulfide-linked.

It belongs to the fimbrial export usher family.

The protein localises to the cell outer membrane. Its function is as follows. Essential for piliation. In Haemophilus influenzae, this protein is Outer membrane usher protein HifC (hifC).